The primary structure comprises 159 residues: 2-C-methyl-D-erythritol 2,4-cyclodiphosphate synthase (159 aa).

A divalent metal cation contacts are provided by D8 and H10. 4-CDP-2-C-methyl-D-erythritol 2-phosphate contacts are provided by residues 8-10 (DVH) and 34-35 (HS). A divalent metal cation is bound at residue H42. Residues 56 to 58 (DIG), 61 to 65 (FPDTD), 100 to 106 (AQAPRML), 132 to 135 (TTTE), F139, and R142 each bind 4-CDP-2-C-methyl-D-erythritol 2-phosphate.

This sequence belongs to the IspF family. Homotrimer. It depends on a divalent metal cation as a cofactor.

It catalyses the reaction 4-CDP-2-C-methyl-D-erythritol 2-phosphate = 2-C-methyl-D-erythritol 2,4-cyclic diphosphate + CMP. The protein operates within isoprenoid biosynthesis; isopentenyl diphosphate biosynthesis via DXP pathway; isopentenyl diphosphate from 1-deoxy-D-xylulose 5-phosphate: step 4/6. In terms of biological role, involved in the biosynthesis of isopentenyl diphosphate (IPP) and dimethylallyl diphosphate (DMAPP), two major building blocks of isoprenoid compounds. Catalyzes the conversion of 4-diphosphocytidyl-2-C-methyl-D-erythritol 2-phosphate (CDP-ME2P) to 2-C-methyl-D-erythritol 2,4-cyclodiphosphate (ME-CPP) with a corresponding release of cytidine 5-monophosphate (CMP). The sequence is that of 2-C-methyl-D-erythritol 2,4-cyclodiphosphate synthase from Escherichia coli O6:K15:H31 (strain 536 / UPEC).